The primary structure comprises 137 residues: Major seminal plasma glycoprotein PSP-II (137 aa).

An N-terminal signal peptide occupies residues 1-21; the sequence is MKLGTAIPWALLLSTATLVST. Cystine bridges form between C30–C51 and C74–C95. The CUB domain occupies 30–131; it reads CGRVIKDTSG…SPFLIYFYGS (102 aa). Residue N119 is glycosylated (N-linked (GlcNAc...) (complex) asparagine).

In terms of assembly, monomer or heterodimer with PSP-I (depending on the type of glycosylation of PSP-I). Seminal plasma or sperm.

It is found in the secreted. The polypeptide is Major seminal plasma glycoprotein PSP-II (Sus scrofa (Pig)).